Reading from the N-terminus, the 883-residue chain is Envelope glycoprotein B (883 aa).

The first 31 residues, 1-31, serve as a signal peptide directing secretion; that stretch reads MQSYIAVNIDMASLKMLICVCVAILIPSTLS. Topologically, residues 32–750 are virion surface; that stretch reads QDSHGIGWNN…SGIASFLSNP (719 aa). 5 disulfide bridges follow: cysteine 77–cysteine 535, cysteine 94–cysteine 491, cysteine 167–cysteine 229, cysteine 321–cysteine 369, and cysteine 558–cysteine 608. Residues asparagine 102 and asparagine 121 are each glycosylated (N-linked (GlcNAc...) asparagine; by host). Residues 134–140 form an involved in fusion and/or binding to host membrane region; it reads TWALFSR. The N-linked (GlcNAc...) asparagine; by host glycan is linked to asparagine 211. The segment at 216–223 is involved in fusion and/or binding to host membrane; it reads HQTLGYRT. 2 N-linked (GlcNAc...) asparagine; by host glycosylation sites follow: asparagine 262 and asparagine 360. Positions 428–457 are disordered; sequence QNHLPRGRERRQAAGRRTASLQSGPQGDRI. 3 N-linked (GlcNAc...) asparagine; by host glycosylation sites follow: asparagine 579, asparagine 635, and asparagine 649. 2 hydrophobic membrane proximal region regions span residues 694–748 and 724–744; these read IDTV…SFLS and ALGTVVMTAAAAVISTVSGIA. Residues 751–771 traverse the membrane as a helical segment; the sequence is FAALAIGIAVVVSIILGLLAF. The Intravirion segment spans residues 772–883; it reads KYVMNLKSNP…PSWAEESEDE (112 aa). Residues 791–817 form a disordered region; that stretch reads PPAGTPPRPSRRYYKDEEEVEEDSDED. Acidic residues predominate over residues 806-817; the sequence is DEEEVEEDSDED. The Internalization motif signature appears at 868–871; the sequence is YPLL.

This sequence belongs to the herpesviridae glycoprotein B family. As to quaternary structure, homotrimer; disulfide-linked. Binds to heparan sulfate proteoglycans. Interacts with gH/gL heterodimer. A proteolytic cleavage by host furin generates two subunits that remain linked by disulfide bonds.

The protein resides in the virion membrane. Its subcellular location is the host cell membrane. It localises to the host endosome membrane. It is found in the host Golgi apparatus membrane. Functionally, envelope glycoprotein that forms spikes at the surface of virion envelope. Essential for the initial attachment to heparan sulfate moieties of the host cell surface proteoglycans. Involved in fusion of viral and cellular membranes leading to virus entry into the host cell. Following initial binding to its host receptors, membrane fusion is mediated by the fusion machinery composed at least of gB and the heterodimer gH/gL. May be involved in the fusion between the virion envelope and the outer nuclear membrane during virion egress. This chain is Envelope glycoprotein B, found in Infectious laryngotracheitis virus (strain SA-2) (ILTV).